The sequence spans 337 residues: tRNA N6-adenosine threonylcarbamoyltransferase (337 aa).

His-111 and His-115 together coordinate Fe cation. Substrate is bound by residues 134-138, Asp-167, Gly-180, and Asn-272; that span reads LVSGG. Residue Asp-300 coordinates Fe cation.

The protein belongs to the KAE1 / TsaD family. Requires Fe(2+) as cofactor.

Its subcellular location is the cytoplasm. The catalysed reaction is L-threonylcarbamoyladenylate + adenosine(37) in tRNA = N(6)-L-threonylcarbamoyladenosine(37) in tRNA + AMP + H(+). Its function is as follows. Required for the formation of a threonylcarbamoyl group on adenosine at position 37 (t(6)A37) in tRNAs that read codons beginning with adenine. Is involved in the transfer of the threonylcarbamoyl moiety of threonylcarbamoyl-AMP (TC-AMP) to the N6 group of A37, together with TsaE and TsaB. TsaD likely plays a direct catalytic role in this reaction. This Enterobacter sp. (strain 638) protein is tRNA N6-adenosine threonylcarbamoyltransferase.